The following is a 430-amino-acid chain: Aspartate aminotransferase, mitochondrial (430 aa).

A mitochondrion-targeting transit peptide spans 1–29 (MALLHSGRALPGIAAAFHPGLAAAASARA). Position 48 is a phosphothreonine (Thr48). Lys59 is modified (N6-acetyllysine). Gly65 serves as a coordination point for substrate. Lys73 carries the post-translational modification N6-acetyllysine; alternate. An N6-succinyllysine; alternate modification is found at Lys73. Lys82 is modified (N6-acetyllysine). Residue Lys90 is modified to N6-acetyllysine; alternate. Residue Lys90 is modified to N6-succinyllysine; alternate. Tyr96 bears the 3'-nitrotyrosine; alternate mark. Tyr96 bears the Phosphotyrosine; alternate mark. Lys107 and Lys122 each carry N6-acetyllysine; alternate. 2 positions are modified to N6-succinyllysine; alternate: Lys107 and Lys122. Ser143 is modified (phosphoserine). The residue at position 159 (Lys159) is an N6-acetyllysine; alternate. Lys159 carries the N6-succinyllysine; alternate modification. Trp162 contacts substrate. Lys185 bears the N6-acetyllysine; alternate mark. The residue at position 185 (Lys185) is an N6-succinyllysine; alternate. Position 215 (Asn215) interacts with substrate. N6-succinyllysine is present on Lys227. N6-acetyllysine is present on Lys234. N6-acetyllysine; alternate is present on residues Lys279 and Lys296. Lys279 is modified (N6-(pyridoxal phosphate)lysine; alternate). The residue at position 296 (Lys296) is an N6-succinyllysine; alternate. At Lys302 the chain carries N6-acetyllysine. At Lys309 the chain carries N6-acetyllysine; alternate. Residue Lys309 is modified to N6-succinyllysine; alternate. The residue at position 313 (Arg313) is an Asymmetric dimethylarginine. A Phosphothreonine modification is found at Thr333. Lys338 bears the N6-acetyllysine; alternate mark. Lys338 carries the post-translational modification N6-succinyllysine; alternate. Lys345 carries the post-translational modification N6-acetyllysine. Lys363 is modified (N6-acetyllysine; alternate). Position 363 is an N6-succinyllysine; alternate (Lys363). Lys364 and Lys387 each carry N6-acetyllysine. Residues Lys396 and Lys404 each carry the N6-acetyllysine; alternate modification. N6-succinyllysine; alternate is present on residues Lys396 and Lys404. Arg407 is a binding site for substrate.

It belongs to the class-I pyridoxal-phosphate-dependent aminotransferase family. In terms of assembly, homodimer. The cofactor is pyridoxal 5'-phosphate.

It is found in the mitochondrion matrix. It localises to the cell membrane. It carries out the reaction L-aspartate + 2-oxoglutarate = oxaloacetate + L-glutamate. The catalysed reaction is L-kynurenine + 2-oxoglutarate = kynurenate + L-glutamate + H2O. Its function is as follows. Catalyzes the irreversible transamination of the L-tryptophan metabolite L-kynurenine to form kynurenic acid (KA). As a member of the malate-aspartate shuttle, it has a key role in the intracellular NAD(H) redox balance. Is important for metabolite exchange between mitochondria and cytosol, and for amino acid metabolism. Facilitates cellular uptake of long-chain free fatty acids. In Pongo abelii (Sumatran orangutan), this protein is Aspartate aminotransferase, mitochondrial (GOT2).